The chain runs to 201 residues: tRNA (guanine-N(7)-)-methyltransferase (201 aa).

Positions 33, 58, 85, and 106 each coordinate S-adenosyl-L-methionine. Asp-106 is an active-site residue. Residues Lys-110, Asp-142, and 180-183 each bind substrate; that span reads TTYE.

Belongs to the class I-like SAM-binding methyltransferase superfamily. TrmB family.

The enzyme catalyses guanosine(46) in tRNA + S-adenosyl-L-methionine = N(7)-methylguanosine(46) in tRNA + S-adenosyl-L-homocysteine. The protein operates within tRNA modification; N(7)-methylguanine-tRNA biosynthesis. Catalyzes the formation of N(7)-methylguanine at position 46 (m7G46) in tRNA. This is tRNA (guanine-N(7)-)-methyltransferase from Mesomycoplasma hyopneumoniae (strain J / ATCC 25934 / NCTC 10110) (Mycoplasma hyopneumoniae).